Here is a 208-residue protein sequence, read N- to C-terminus: Guanylate kinase (208 aa).

The region spanning 5 to 184 is the Guanylate kinase-like domain; the sequence is GLLIVFSGPS…AAERVKCVIE (180 aa). 12–19 contributes to the ATP binding site; sequence GPSGVGKG.

It belongs to the guanylate kinase family.

It is found in the cytoplasm. The catalysed reaction is GMP + ATP = GDP + ADP. In terms of biological role, essential for recycling GMP and indirectly, cGMP. This chain is Guanylate kinase, found in Streptococcus pneumoniae (strain ATCC BAA-255 / R6).